We begin with the raw amino-acid sequence, 236 residues long: MPQRLYTYPPLLRGRLLQRYKRFFADIELDSGETITAHCPNTGPMTGVCQMGNLVYVSKSDNPKRKLAYTWELIEVTDNEPTWVGVNTGLPNRVVQALLEQRCLPVLGDYGEVQREVPYGENSRIDFRLTGDRPIYVEVKNTTWTAGRLALFPDTVTTRGQKHLRELTAILLEARAVMLYFINRGDCTAFAPGDSADPTYGQLLRTGIAAGLEVYPCQFQISPEGIDFLGVAPLQL.

Belongs to the SfsA family.

The polypeptide is Sugar fermentation stimulation protein homolog (Synechococcus elongatus (strain ATCC 33912 / PCC 7942 / FACHB-805) (Anacystis nidulans R2)).